Consider the following 773-residue polypeptide: 4'-phosphopantetheine phosphatase (773 aa).

N-acetylalanine is present on Ala2. Positions 2–402 are pantothenate kinase; that stretch reads AECRASGGGS…APELCPTQRA (401 aa). Acetyl-CoA contacts are provided by Ser196 and Ser199. Position 320 is a 3'-nitrotyrosine (Tyr320). Residues 403–773 form a 4'-phosphopantetheine phosphatase region; that stretch reads RSGTFDLLEM…VIFKYEVPAE (371 aa). Ser404 is subject to Phosphoserine. Thr406 is modified (phosphothreonine). The Mn(2+) site is built by Asp623, Asn624, and Asp659. The Subfamily II EGMGR motif signature appears at 724-728; that stretch reads EGMGR.

This sequence in the N-terminal section; belongs to the type II pantothenate kinase family. In the C-terminal section; belongs to the damage-control phosphatase family. Phosphopantetheine phosphatase (II) subfamily. Homodimer. Interacts with PKM. Mn(2+) serves as cofactor. The cofactor is Ni(2+).

Its subcellular location is the cytoplasm. It catalyses the reaction (R)-4'-phosphopantetheine + H2O = (R)-pantetheine + phosphate. The enzyme catalyses (R)-4'-phosphopantetheine sulfonate + H2O = (R)-pantetheine sulfonate + phosphate. The catalysed reaction is (R)-4'-phospho-S-sulfopantetheine + H2O = (R)-S-sulfopantetheine + phosphate. With respect to regulation, activity is strongly promoted by Co(2+), Ni(2+), Mg(2+) and Mn(2+). Activity is inhibited by EDTA. In terms of biological role, phosphatase which shows a preference for 4'-phosphopantetheine and its oxidatively damaged forms (sulfonate or S-sulfonate), providing strong indirect evidence that the phosphatase activity pre-empts damage in the coenzyme A (CoA) pathway. Hydrolyzing excess 4'-phosphopantetheine could constitute a directed overflow mechanism to prevent its oxidation to the S-sulfonate, sulfonate, or other forms. Hydrolyzing 4'-phosphopantetheine sulfonate or S-sulfonate would forestall their conversion to inactive forms of CoA and acyl carrier protein. May play a role in the physiological regulation of CoA intracellular levels. The protein is 4'-phosphopantetheine phosphatase of Rattus norvegicus (Rat).